Here is a 296-residue protein sequence, read N- to C-terminus: Cytidine deaminase (296 aa).

2 CMP/dCMP-type deaminase domains span residues 47 to 167 and 186 to 296; these read AESE…FGPS and DSSD…LDPE. 88–90 is a substrate binding site; it reads NME. Zn(2+) is bound at residue H101. E103 (proton donor) is an active-site residue. The Zn(2+) site is built by C128 and C131.

This sequence belongs to the cytidine and deoxycytidylate deaminase family. Homodimer. The cofactor is Zn(2+).

It catalyses the reaction cytidine + H2O + H(+) = uridine + NH4(+). The enzyme catalyses 2'-deoxycytidine + H2O + H(+) = 2'-deoxyuridine + NH4(+). This enzyme scavenges exogenous and endogenous cytidine and 2'-deoxycytidine for UMP synthesis. The chain is Cytidine deaminase from Shewanella sediminis (strain HAW-EB3).